A 185-amino-acid polypeptide reads, in one-letter code: Ribosome-recycling factor (185 aa).

Belongs to the RRF family.

It localises to the cytoplasm. Its function is as follows. Responsible for the release of ribosomes from messenger RNA at the termination of protein biosynthesis. May increase the efficiency of translation by recycling ribosomes from one round of translation to another. The sequence is that of Ribosome-recycling factor from Alkaliphilus oremlandii (strain OhILAs) (Clostridium oremlandii (strain OhILAs)).